The following is a 323-amino-acid chain: MDSKYQCVKLNDGHFMPVLGFGTYAPAEVPKSKALEATKLAIEAGFRHIDSAHLYNNEEQVGLAIRSKIADGSVKREDIFYTSKLWCNSHRPELVRPALERSLKNLQLDYVDLYLIHFPVSVKPGEEVIPKDENGKILFDTVDLCATWEAVEKCKDAGLAKSIGVSNFNRRQLEMILNKPGLKYKPVCNQVECHPYFNQRKLLDFCKSKDIVLVAYSALGSHREEPWVDPNSPVLLEDPVLCALAKKHKRTPALIALRYQLQRGVVVLAKSYNEQRIRQNVQVFEFQLTSEEMKAIDGLNRNVRYLTLDIFAGPPNYPFSDEY.

NADP(+)-binding positions include 20–24 and Asp50; that span reads GFGTY. Residue Tyr24 participates in substrate binding. Tyr55 serves as the catalytic Proton donor. A substrate-binding site is contributed by His117. NADP(+) is bound by residues 166–167, Gln190, and 216–222; these read SN and YSALGSH. The substrate site is built by His222 and Trp227. NADP(+) is bound at residue 270-280; that stretch reads KSYNEQRIRQN.

The protein belongs to the aldo/keto reductase family. In terms of assembly, monomer. As to expression, expressed in all tissues tested including liver, prostate, testis, adrenal gland, brain, uterus, mammary gland and keratinocytes. Highest levels found in liver, mammary gland and brain.

It localises to the cytoplasm. Its subcellular location is the cytosol. The catalysed reaction is a 3alpha-hydroxysteroid + NADP(+) = a 3-oxosteroid + NADPH + H(+). It catalyses the reaction a 3alpha-hydroxysteroid + NAD(+) = a 3-oxosteroid + NADH + H(+). It carries out the reaction (17R,20S)-17,20-dihydroxypregn-4-en-3-one + NADP(+) = 17alpha-hydroxyprogesterone + NADPH + H(+). The enzyme catalyses (17R,20S)-17,20-dihydroxypregn-4-en-3-one + NAD(+) = 17alpha-hydroxyprogesterone + NADH + H(+). The catalysed reaction is (20S)-hydroxypregn-4-en-3-one + NADP(+) = progesterone + NADPH + H(+). It catalyses the reaction (20S)-hydroxypregn-4-en-3-one + NAD(+) = progesterone + NADH + H(+). It carries out the reaction (1R,2R)-1,2-dihydrobenzene-1,2-diol + NADP(+) = catechol + NADPH + H(+). The enzyme catalyses (S)-indan-1-ol + NAD(+) = indan-1-one + NADH + H(+). The catalysed reaction is (S)-indan-1-ol + NADP(+) = indan-1-one + NADPH + H(+). It catalyses the reaction 5alpha-androstane-3alpha,17beta-diol + NADP(+) = 17beta-hydroxy-5alpha-androstan-3-one + NADPH + H(+). It carries out the reaction 5alpha-androstane-3beta,17beta-diol + NADP(+) = 17beta-hydroxy-5alpha-androstan-3-one + NADPH + H(+). The enzyme catalyses 5alpha-androstane-3alpha,17beta-diol + NAD(+) = 17beta-hydroxy-5alpha-androstan-3-one + NADH + H(+). The catalysed reaction is 17beta-hydroxy-5alpha-androstan-3-one + NADP(+) = 5alpha-androstan-3,17-dione + NADPH + H(+). It catalyses the reaction androsterone + NADP(+) = 5alpha-androstan-3,17-dione + NADPH + H(+). It carries out the reaction androsterone + NADPH + H(+) = 5alpha-androstane-3alpha,17beta-diol + NADP(+). The enzyme catalyses 5alpha-androstane-3alpha,17beta-diol + NAD(+) = androsterone + NADH + H(+). The catalysed reaction is 17beta-estradiol + NADP(+) = estrone + NADPH + H(+). It catalyses the reaction 17beta-estradiol + NAD(+) = estrone + NADH + H(+). It carries out the reaction testosterone + NADP(+) = androst-4-ene-3,17-dione + NADPH + H(+). The enzyme catalyses 20alpha-hydroxy-5beta-pregnan-3-one + NADP(+) = 5beta-pregnan-3,20-dione + NADPH + H(+). The catalysed reaction is 3beta-hydroxy-5beta-pregnane-20-one + NADP(+) = 5beta-pregnan-3,20-dione + NADPH + H(+). It catalyses the reaction 3beta-hydroxy-5beta-pregnane-20-one + NADPH + H(+) = 3beta,20alpha-dihydroxy-5beta-pregnane + NADP(+). It carries out the reaction (3beta,5alpha,17beta)-3-hydroxyandrostan-17-yl sulfate + NADP(+) = 5alpha-dihydrotestosterone sulfate + NADPH + H(+). It participates in steroid metabolism. Its activity is regulated as follows. Inhibited by hexestrol with an IC(50) of 9.5 uM, 1,10-phenanthroline with an IC(50) of 55 uM, 1,7-phenanthroline with an IC(50) of 72 uM, flufenamic acid with an IC(50) of 6.0 uM, indomethacin with an IC(50) of 140 uM, ibuprofen with an IC(50) of 950 uM, lithocholic acid with an IC(50) of 25 uM, ursodeoxycholic acid with an IC(50) of 340 uM and chenodeoxycholic acid with an IC(50) of 570 uM. The oxidation reaction is inhibited by low micromolar concentrations of NADPH. In terms of biological role, cytosolic aldo-keto reductase that catalyzes the NADH and NADPH-dependent reduction of ketosteroids to hydroxysteroids. Most probably acts as a reductase in vivo since the oxidase activity measured in vitro is inhibited by physiological concentrations of NADPH. Displays a broad positional specificity acting on positions 3, 17 and 20 of steroids and regulates the metabolism of hormones like estrogens and androgens. May also reduce conjugated steroids such as 5alpha-dihydrotestosterone sulfate. Displays affinity for bile acids. The protein is Aldo-keto reductase family 1 member C1 (AKR1C1) of Homo sapiens (Human).